The primary structure comprises 117 residues: Large ribosomal subunit protein bL20 (117 aa).

The protein belongs to the bacterial ribosomal protein bL20 family.

Its function is as follows. Binds directly to 23S ribosomal RNA and is necessary for the in vitro assembly process of the 50S ribosomal subunit. It is not involved in the protein synthesizing functions of that subunit. In Rippkaea orientalis (strain PCC 8801 / RF-1) (Cyanothece sp. (strain PCC 8801)), this protein is Large ribosomal subunit protein bL20.